A 327-amino-acid chain; its full sequence is Porphobilinogen deaminase (327 aa).

Position 251 is an S-(dipyrrolylmethanemethyl)cysteine (C251).

It belongs to the HMBS family. Requires dipyrromethane as cofactor.

It carries out the reaction 4 porphobilinogen + H2O = hydroxymethylbilane + 4 NH4(+). The protein operates within porphyrin-containing compound metabolism; protoporphyrin-IX biosynthesis; coproporphyrinogen-III from 5-aminolevulinate: step 2/4. Functionally, catalyzes the tetrapolymerization of the monopyrrole porphobilinogen (PBG) into the hydroxymethylbilane pre-uroporphyrinogen in several discrete steps. This Saccharomyces cerevisiae (strain ATCC 204508 / S288c) (Baker's yeast) protein is Porphobilinogen deaminase (HEM3).